The chain runs to 722 residues: Serine/threonine-protein kinase MARK2 (722 aa).

Residues 1-46 are disordered; the sequence is MSSARTPLPTLNERDTEQPTLGHLDSKPSSKSNMLRGRNSATSADE. The span at 27-45 shows a compositional bias: polar residues; sequence KPSSKSNMLRGRNSATSAD. Serine 40 is subject to Phosphoserine. Positions 53 to 304 constitute a Protein kinase domain; that stretch reads YRLLKTIGKG…LEQIMKDRWM (252 aa). Threonine 58 carries the phosphothreonine; by autocatalysis modification. Residues 59–67 and lysine 82 each bind ATP; that span reads IGKGNFAKV. Serine 91, serine 92, and serine 93 each carry phosphoserine; by CaMK1. Aspartate 175 acts as the Proton acceptor in catalysis. Threonine 208 carries the post-translational modification Phosphothreonine; by LKB1 and TAOK1. Phosphoserine; by GSK3-beta is present on serine 212. Residue serine 274 is modified to Phosphoserine; by autocatalysis. Threonine 275 carries the post-translational modification Phosphothreonine; by autocatalysis. Threonine 294 is subject to Phosphothreonine; by CaMK1. Residues 323-362 enclose the UBA domain; it reads YKDPRRTELMVSMGYTREEIQDSLVGQRYNEVMATYLLLG. The segment at 373 to 576 is disordered; sequence ITLKPRPSAD…SQGRRGASGS (204 aa). Phosphoserine is present on residues serine 408 and serine 409. A compositionally biased stretch (polar residues) spans 417–431; the sequence is PTSNSYSKKTQSNNA. Basic and acidic residues predominate over residues 432–442; that stretch reads ENKRPEEETGR. Serine 453 bears the Phosphoserine mark. Threonine 464 carries the phosphothreonine modification. The segment covering 464-483 has biased composition (polar residues); it reads TPTPSTNSVLSTSTNRSRNS. Phosphoserine occurs at positions 483 and 490. Residues 492-505 show a composition bias toward polar residues; the sequence is GQASIQNGKDSTAP. Positions 511–524 are enriched in low complexity; it reads ASPSAHNISSSSGA. Residues serine 512, serine 514, and serine 535 each carry the phosphoserine modification. Position 539 is a phosphothreonine; by PKC/PRKCZ (threonine 539). Phosphoserine is present on residues serine 562 and serine 656. A KA1 domain is found at 673-722; the sequence is TPGHENFVQWEMEVCKLPRLSLNGVRFKRISGTSMAFKNIASKIANELKL.

It belongs to the protein kinase superfamily. CAMK Ser/Thr protein kinase family. SNF1 subfamily. In terms of assembly, homodimer. Interacts (when phosphorylated at Thr-539) with YWHAZ. Interacts with MTCL1; the interaction is direct and increases MARK2 microtubule-binding ability. Interacts with PAK5; leading to inhibit the protein kinase activity. Interacts with MAPT/TAU. Interacts with YWHAB, YWHAG and YWHAQ. Requires Mg(2+) as cofactor. Autophosphorylated. Phosphorylated at Thr-208 by STK11/LKB1 in complex with STE20-related adapter-alpha (STRADA) pseudo kinase and CAB39. Phosphorylation at Thr-208 by TAOK1 activates the kinase activity, leading to phosphorylation and detachment of MAPT/TAU from microtubules. Phosphorylation at Ser-212 by GSK3-beta (GSK3B) inhibits the kinase activity. Phosphorylation by CaMK1 promotes activity and is required to promote neurite outgrowth. Phosphorylation at Thr-539 by PRKCZ/aPKC in polarized epithelial cells inhibits the kinase activity and promotes binding to 14-3-3 protein YWHAZ, leading to relocation from cell membrane to cytoplasm.

The protein localises to the cell membrane. It localises to the lateral cell membrane. Its subcellular location is the cytoplasm. It is found in the cytoskeleton. The protein resides in the cell projection. The protein localises to the dendrite. The enzyme catalyses L-seryl-[protein] + ATP = O-phospho-L-seryl-[protein] + ADP + H(+). It carries out the reaction L-threonyl-[protein] + ATP = O-phospho-L-threonyl-[protein] + ADP + H(+). The catalysed reaction is L-seryl-[tau protein] + ATP = O-phospho-L-seryl-[tau protein] + ADP + H(+). It catalyses the reaction L-threonyl-[tau protein] + ATP = O-phospho-L-threonyl-[tau protein] + ADP + H(+). With respect to regulation, inhibited by hymenialdisine. Activated by phosphorylation on Thr-208 by STK11/LKB1 and TAOK1. Inhibited by phosphorylation at Ser-212 or Thr-539. Inhibited by PAK5; inhibition is independent of the kinase activity of PAK5. Its function is as follows. Serine/threonine-protein kinase. Involved in cell polarity and microtubule dynamics regulation. Phosphorylates CRTC2/TORC2, DCX, HDAC7, KIF13B, MAP2, MAP4 and RAB11FIP2. Phosphorylates the microtubule-associated protein MAPT/TAU. Plays a key role in cell polarity by phosphorylating the microtubule-associated proteins MAP2, MAP4 and MAPT/TAU at KXGS motifs, causing detachment from microtubules, and their disassembly. Regulates epithelial cell polarity by phosphorylating RAB11FIP2. Involved in the regulation of neuronal migration through its dual activities in regulating cellular polarity and microtubule dynamics, possibly by phosphorylating and regulating DCX. Regulates axogenesis by phosphorylating KIF13B, promoting interaction between KIF13B and 14-3-3 and inhibiting microtubule-dependent accumulation of KIF13B. Also required for neurite outgrowth and establishment of neuronal polarity. Regulates localization and activity of some histone deacetylases by mediating phosphorylation of HDAC7, promoting subsequent interaction between HDAC7 and 14-3-3 and export from the nucleus. Also acts as a positive regulator of the Wnt signaling pathway, probably by mediating phosphorylation of dishevelled proteins (DVL1, DVL2 and/or DVL3). Modulates the developmental decision to build a columnar versus a hepatic epithelial cell apparently by promoting a switch from a direct to a transcytotic mode of apical protein delivery. Essential for the asymmetric development of membrane domains of polarized epithelial cells. The polypeptide is Serine/threonine-protein kinase MARK2 (Rattus norvegicus (Rat)).